A 569-amino-acid chain; its full sequence is CTP synthase (569 aa).

Residues 1–276 (MNQATPTKHV…DAYLVRRLDL (276 aa)) are amidoligase domain. Serine 18 provides a ligand contact to CTP. Serine 18 contributes to the UTP binding site. ATP contacts are provided by residues 19–24 (SLGKGL) and aspartate 76. Residues aspartate 76 and glutamate 150 each coordinate Mg(2+). Residues 157–159 (DIE), 197–202 (KTKPTQ), and lysine 233 contribute to the CTP site. UTP contacts are provided by residues 197–202 (KTKPTQ) and lysine 233. The 250-residue stretch at 301–550 (TVALVGKYVD…VGAAIERQRE (250 aa)) folds into the Glutamine amidotransferase type-1 domain. Glycine 364 provides a ligand contact to L-glutamine. Catalysis depends on cysteine 391, which acts as the Nucleophile; for glutamine hydrolysis. L-glutamine-binding positions include 392–395 (LGLQ), glutamate 415, and arginine 476. Residues histidine 523 and glutamate 525 contribute to the active site.

It belongs to the CTP synthase family. In terms of assembly, homotetramer.

The enzyme catalyses UTP + L-glutamine + ATP + H2O = CTP + L-glutamate + ADP + phosphate + 2 H(+). It catalyses the reaction L-glutamine + H2O = L-glutamate + NH4(+). The catalysed reaction is UTP + NH4(+) + ATP = CTP + ADP + phosphate + 2 H(+). It participates in pyrimidine metabolism; CTP biosynthesis via de novo pathway; CTP from UDP: step 2/2. With respect to regulation, allosterically activated by GTP, when glutamine is the substrate; GTP has no effect on the reaction when ammonia is the substrate. The allosteric effector GTP functions by stabilizing the protein conformation that binds the tetrahedral intermediate(s) formed during glutamine hydrolysis. Inhibited by the product CTP, via allosteric rather than competitive inhibition. Its function is as follows. Catalyzes the ATP-dependent amination of UTP to CTP with either L-glutamine or ammonia as the source of nitrogen. Regulates intracellular CTP levels through interactions with the four ribonucleotide triphosphates. This chain is CTP synthase, found in Nocardioides sp. (strain ATCC BAA-499 / JS614).